A 253-amino-acid chain; its full sequence is Ribonuclease HII (253 aa).

The RNase H type-2 domain occupies 70–253; the sequence is PLVAGIDEVG…RSFSPVQNAL (184 aa). A divalent metal cation contacts are provided by Asp-76, Glu-77, and Asp-168.

The protein belongs to the RNase HII family. Mn(2+) is required as a cofactor. Mg(2+) serves as cofactor.

It localises to the cytoplasm. The enzyme catalyses Endonucleolytic cleavage to 5'-phosphomonoester.. Its function is as follows. Endonuclease that specifically degrades the RNA of RNA-DNA hybrids. This chain is Ribonuclease HII, found in Latilactobacillus sakei subsp. sakei (strain 23K) (Lactobacillus sakei subsp. sakei).